The following is a 143-amino-acid chain: Small ribosomal subunit protein eS19B (143 aa).

The protein belongs to the eukaryotic ribosomal protein eS19 family. As to quaternary structure, component of the small ribosomal subunit (SSU). Mature yeast ribosomes consist of a small (40S) and a large (60S) subunit. The 40S small subunit contains 1 molecule of ribosomal RNA (18S rRNA) and at least 33 different proteins. The large 60S subunit contains 3 rRNA molecules (25S, 5.8S and 5S rRNA) and at least 46 different proteins.

It localises to the cytoplasm. The protein resides in the nucleus. In terms of biological role, component of the ribosome, a large ribonucleoprotein complex responsible for the synthesis of proteins in the cell. The small ribosomal subunit (SSU) binds messenger RNAs (mRNAs) and translates the encoded message by selecting cognate aminoacyl-transfer RNA (tRNA) molecules. The large subunit (LSU) contains the ribosomal catalytic site termed the peptidyl transferase center (PTC), which catalyzes the formation of peptide bonds, thereby polymerizing the amino acids delivered by tRNAs into a polypeptide chain. The nascent polypeptides leave the ribosome through a tunnel in the LSU and interact with protein factors that function in enzymatic processing, targeting, and the membrane insertion of nascent chains at the exit of the ribosomal tunnel. eS19 is required for proper maturation of the small (40S) ribosomal subunit. Binds to 40S pre-ribosomal particles, probably required after association of NOC4 but before association of ENP1, TSR1 and RIO2 with 20/21S pre-rRNA. The polypeptide is Small ribosomal subunit protein eS19B (rps1902) (Schizosaccharomyces pombe (strain 972 / ATCC 24843) (Fission yeast)).